Reading from the N-terminus, the 530-residue chain is Histone-arginine methyltransferase CARMER (530 aa).

Residues 141 to 450 (ASQYFQFYGY…QSYDVTIDLH (310 aa)) enclose the SAM-dependent MTase PRMT-type domain. Positions 154, 163, 187, 209, 238, and 266 each coordinate S-adenosyl-L-methionine. An Asymmetric dimethylarginine; by autocatalysis modification is found at Arg501.

It belongs to the class I-like SAM-binding methyltransferase superfamily. Protein arginine N-methyltransferase family. In terms of assembly, homodimer. In terms of processing, the dimethylated protein is the major form.

It localises to the cytoplasm. It is found in the nucleus. The catalysed reaction is L-arginyl-[protein] + 2 S-adenosyl-L-methionine = N(omega),N(omega)-dimethyl-L-arginyl-[protein] + 2 S-adenosyl-L-homocysteine + 2 H(+). Its function is as follows. Methylates (mono- and asymmetric dimethylation) the guanidino nitrogens of arginyl residues in proteins. May methylate histone H3 at 'Arg-17' and activate transcription via chromatin remodeling. The sequence is that of Histone-arginine methyltransferase CARMER (Art4) from Drosophila yakuba (Fruit fly).